Reading from the N-terminus, the 258-residue chain is Imidazole glycerol phosphate synthase subunit HisF (258 aa).

Catalysis depends on residues Asp-11 and Asp-130.

The protein belongs to the HisA/HisF family. In terms of assembly, heterodimer of HisH and HisF.

It localises to the cytoplasm. It catalyses the reaction 5-[(5-phospho-1-deoxy-D-ribulos-1-ylimino)methylamino]-1-(5-phospho-beta-D-ribosyl)imidazole-4-carboxamide + L-glutamine = D-erythro-1-(imidazol-4-yl)glycerol 3-phosphate + 5-amino-1-(5-phospho-beta-D-ribosyl)imidazole-4-carboxamide + L-glutamate + H(+). The protein operates within amino-acid biosynthesis; L-histidine biosynthesis; L-histidine from 5-phospho-alpha-D-ribose 1-diphosphate: step 5/9. Its function is as follows. IGPS catalyzes the conversion of PRFAR and glutamine to IGP, AICAR and glutamate. The HisF subunit catalyzes the cyclization activity that produces IGP and AICAR from PRFAR using the ammonia provided by the HisH subunit. In Methylorubrum populi (strain ATCC BAA-705 / NCIMB 13946 / BJ001) (Methylobacterium populi), this protein is Imidazole glycerol phosphate synthase subunit HisF.